The sequence spans 542 residues: Glucans biosynthesis protein G (542 aa).

A signal peptide spans 1–34 (MVSLLRCPSSKPYSSLICSLTLGAVVALSGVAYA).

Belongs to the OpgD/OpgG family.

The protein localises to the periplasm. It participates in glycan metabolism; osmoregulated periplasmic glucan (OPG) biosynthesis. Its function is as follows. Involved in the biosynthesis of osmoregulated periplasmic glucans (OPGs). This is Glucans biosynthesis protein G from Shewanella baltica (strain OS223).